The following is a 367-amino-acid chain: Ferrochelatase (367 aa).

The Fe cation site is built by His-226 and Glu-307.

It belongs to the ferrochelatase family.

It localises to the cytoplasm. The enzyme catalyses heme b + 2 H(+) = protoporphyrin IX + Fe(2+). It functions in the pathway porphyrin-containing compound metabolism; protoheme biosynthesis; protoheme from protoporphyrin-IX: step 1/1. Its function is as follows. Catalyzes the ferrous insertion into protoporphyrin IX. The protein is Ferrochelatase of Burkholderia pseudomallei (strain 668).